The following is a 422-amino-acid chain: Tyrosine--tRNA ligase (422 aa).

Residue Tyr-35 coordinates L-tyrosine. Positions 40–49 match the 'HIGH' region motif; the sequence is PTAASLHVGH. Residues Tyr-169 and Gln-173 each coordinate L-tyrosine. Residues 229-233 carry the 'KMSKS' region motif; that stretch reads KFGKT. An ATP-binding site is contributed by Lys-232. Positions 352–418 constitute an S4 RNA-binding domain; it reads VRLAQLFADT…GKKSLASVAV (67 aa).

The protein belongs to the class-I aminoacyl-tRNA synthetase family. TyrS type 1 subfamily. In terms of assembly, homodimer.

The protein localises to the cytoplasm. It carries out the reaction tRNA(Tyr) + L-tyrosine + ATP = L-tyrosyl-tRNA(Tyr) + AMP + diphosphate + H(+). Functionally, catalyzes the attachment of tyrosine to tRNA(Tyr) in a two-step reaction: tyrosine is first activated by ATP to form Tyr-AMP and then transferred to the acceptor end of tRNA(Tyr). The protein is Tyrosine--tRNA ligase of Kineococcus radiotolerans (strain ATCC BAA-149 / DSM 14245 / SRS30216).